The following is an 858-amino-acid chain: Adenylate cyclase, germination specific (858 aa).

The Cytoplasmic segment spans residues 1 to 18; sequence MKKTFVKILSKSYVEGYP. A helical; Signal-anchor for type II membrane protein transmembrane segment spans residues 19–41; the sequence is VGFFIGLIILAIFGSMVCIFSFM. Residues 42–858 lie on the Extracellular side of the membrane; the sequence is HYSEEENSNI…DENVESKKNK (817 aa). The 232-residue stretch at 86–317 folds into the CHASE domain; it reads VNPNFDRNDF…DCVLKLWIFT (232 aa). Positions 396-526 constitute a Guanylate cyclase domain; that stretch reads CVFFLDIAGF…DTVNVASRME (131 aa). Mg(2+)-binding residues include D401, I402, and D445. Disordered stretches follow at residues 650–691, 767–803, and 827–858; these read YYYH…YHDT, SDNV…STNE, and ENCD…KKNK. 3 stretches are compositionally biased toward low complexity: residues 767-778, 788-797, and 834-849; these read SDNVNNYENNNN, GDNNNINDNN, and DNNN…NNND.

It belongs to the adenylyl cyclase class-4/guanylyl cyclase family.

It localises to the membrane. It catalyses the reaction ATP = 3',5'-cyclic AMP + diphosphate. With respect to regulation, insensitive to guanine nucleotides. Has a large extracellular domain which may be involved in the recognition of an extracellular signal present during germination, leading to activation or inhibition of cAMP synthesis by the cytoplasmic domain. This Dictyostelium discoideum (Social amoeba) protein is Adenylate cyclase, germination specific (acgA).